A 322-amino-acid chain; its full sequence is HPr kinase/phosphorylase (322 aa).

Active-site residues include histidine 146 and lysine 167. An ATP-binding site is contributed by 161–168 (GDSGLGKS). Serine 168 lines the Mg(2+) pocket. Residue aspartate 185 is the Proton acceptor; for phosphorylation activity. Proton donor; for dephosphorylation activity of the active site. The tract at residues 209-218 (LEVRGLGLLD) is important for the catalytic mechanism of both phosphorylation and dephosphorylation. Position 210 (glutamate 210) interacts with Mg(2+). Arginine 250 is a catalytic residue. The important for the catalytic mechanism of dephosphorylation stretch occupies residues 271-276 (QVAAGR).

The protein belongs to the HPrK/P family. As to quaternary structure, homohexamer. It depends on Mg(2+) as a cofactor.

The catalysed reaction is [HPr protein]-L-serine + ATP = [HPr protein]-O-phospho-L-serine + ADP + H(+). It catalyses the reaction [HPr protein]-O-phospho-L-serine + phosphate + H(+) = [HPr protein]-L-serine + diphosphate. Its function is as follows. Catalyzes the ATP- as well as the pyrophosphate-dependent phosphorylation of a specific serine residue in HPr, a phosphocarrier protein of the phosphoenolpyruvate-dependent sugar phosphotransferase system (PTS). HprK/P also catalyzes the pyrophosphate-producing, inorganic phosphate-dependent dephosphorylation (phosphorolysis) of seryl-phosphorylated HPr (P-Ser-HPr). The sequence is that of HPr kinase/phosphorylase from Burkholderia mallei (strain NCTC 10247).